A 926-amino-acid chain; its full sequence is Alanine--tRNA ligase (926 aa).

The Zn(2+) site is built by H615, H619, C719, and H723. The interval 887–910 (RVGGGGGGPPDFAQGGGPDADALD) is disordered. Positions 888-904 (VGGGGGGPPDFAQGGGP) are enriched in gly residues.

The protein belongs to the class-II aminoacyl-tRNA synthetase family. Requires Zn(2+) as cofactor.

The protein localises to the cytoplasm. It carries out the reaction tRNA(Ala) + L-alanine + ATP = L-alanyl-tRNA(Ala) + AMP + diphosphate. Functionally, catalyzes the attachment of alanine to tRNA(Ala) in a two-step reaction: alanine is first activated by ATP to form Ala-AMP and then transferred to the acceptor end of tRNA(Ala). Also edits incorrectly charged Ser-tRNA(Ala) and Gly-tRNA(Ala) via its editing domain. The chain is Alanine--tRNA ligase from Halorubrum lacusprofundi (strain ATCC 49239 / DSM 5036 / JCM 8891 / ACAM 34).